The chain runs to 501 residues: MDQKVRVRYAPSPTGFLHIGNAQSALFNYLFARHFDGTMVLRIEDTDTKRNVEDGEASQRENLHWLGIDWDEGPNKPNPKYAPYRQSERNKEGIYHKYIQELLDKGIAYKDYSTEEELAEMRERQKANNEPPHYDGRWYGKSEEEQKAAEAKGLKPTIRFHFPKDHDYEWDDIARGHVSFNSDNLGGDFIIEKSDGMPTYNFAVVVDDHTMDITHVLRGADHISNTPKQIAIYEALGWEHPTFCHIPLIFNPKTRKKLSKRDKDTLQFISEYKKHGYLHEAIFNFIAFLGWSPVGEREIYSKEELIKVYDPKRMSKAPAYFDQKKLDWMNAQYIKSMSIDELTDRTMELIKEGETEEAKRLQSIPEEQLTELLKKTIKVHQRDVNKLLEVIQYAWSYYTVLDQSFNYDLLKDNEDFANEDVLAVLKGLKAKLENGDDDLDYSQAIKEVGKDTGIKGRGLYFPLNLAFTGSTSAPQIYEIMDIYSRDTDIELLDRMIKAFEN.

The 'HIGH' region signature appears at 11-21; sequence PSPTGFLHIGN. The 'KMSKS' region signature appears at 257 to 261; the sequence is KLSKR. ATP is bound at residue K260.

This sequence belongs to the class-I aminoacyl-tRNA synthetase family. Glutamate--tRNA ligase type 1 subfamily. In terms of assembly, monomer.

It is found in the cytoplasm. It carries out the reaction tRNA(Glu) + L-glutamate + ATP = L-glutamyl-tRNA(Glu) + AMP + diphosphate. Catalyzes the attachment of glutamate to tRNA(Glu) in a two-step reaction: glutamate is first activated by ATP to form Glu-AMP and then transferred to the acceptor end of tRNA(Glu). This Limosilactobacillus reuteri subsp. reuteri (strain JCM 1112) (Lactobacillus reuteri) protein is Glutamate--tRNA ligase.